The chain runs to 258 residues: Thiazole synthase (258 aa).

The active-site Schiff-base intermediate with DXP is Lys100. Residues Gly161, 187-188 (AG), and 209-210 (NT) contribute to the 1-deoxy-D-xylulose 5-phosphate site.

The protein belongs to the ThiG family. In terms of assembly, homotetramer. Forms heterodimers with either ThiH or ThiS.

The protein resides in the cytoplasm. It carries out the reaction [ThiS sulfur-carrier protein]-C-terminal-Gly-aminoethanethioate + 2-iminoacetate + 1-deoxy-D-xylulose 5-phosphate = [ThiS sulfur-carrier protein]-C-terminal Gly-Gly + 2-[(2R,5Z)-2-carboxy-4-methylthiazol-5(2H)-ylidene]ethyl phosphate + 2 H2O + H(+). It functions in the pathway cofactor biosynthesis; thiamine diphosphate biosynthesis. In terms of biological role, catalyzes the rearrangement of 1-deoxy-D-xylulose 5-phosphate (DXP) to produce the thiazole phosphate moiety of thiamine. Sulfur is provided by the thiocarboxylate moiety of the carrier protein ThiS. In vitro, sulfur can be provided by H(2)S. The protein is Thiazole synthase of Campylobacter jejuni subsp. doylei (strain ATCC BAA-1458 / RM4099 / 269.97).